A 293-amino-acid chain; its full sequence is ATP synthase gamma chain (293 aa).

It belongs to the ATPase gamma chain family. In terms of assembly, F-type ATPases have 2 components, CF(1) - the catalytic core - and CF(0) - the membrane proton channel. CF(1) has five subunits: alpha(3), beta(3), gamma(1), delta(1), epsilon(1). CF(0) has three main subunits: a, b and c.

Its subcellular location is the cell inner membrane. Its function is as follows. Produces ATP from ADP in the presence of a proton gradient across the membrane. The gamma chain is believed to be important in regulating ATPase activity and the flow of protons through the CF(0) complex. In Allorhizobium ampelinum (strain ATCC BAA-846 / DSM 112012 / S4) (Agrobacterium vitis (strain S4)), this protein is ATP synthase gamma chain.